The sequence spans 184 residues: Type-1 fimbrial protein, A chain (184 aa).

The signal sequence occupies residues 1-22 (MKHKLMTSTIASLMFVAGAAVA). Cysteines 46 and 86 form a disulfide.

Belongs to the fimbrial protein family.

It localises to the fimbrium. Fimbriae (also called pili), polar filaments radiating from the surface of the bacterium to a length of 0.5-1.5 micrometers and numbering 100-300 per cell, enable bacteria to colonize the epithelium of specific host organs. The polypeptide is Type-1 fimbrial protein, A chain (fimA) (Salmonella typhi).